The following is a 469-amino-acid chain: Putative multidrug resistance protein MdtD (469 aa).

The next 13 helical transmembrane spans lie at 8 to 28, 45 to 65, 68 to 88, 102 to 122, 134 to 154, 161 to 181, 191 to 211, 215 to 235, 263 to 283, 286 to 306, 338 to 358, 392 to 412, and 426 to 446; these read LWIV…VNTA, SVIV…GWLA, VGVK…SLLC, VIQG…VMKI, FVTL…GFLV, WIFL…LWLM, FDIS…LALD, GLGL…LALA, LIGS…TPVF, IGLG…IIGS, LSFP…VLFF, MVMQ…LGVF, and SAFL…ALIF.

The protein belongs to the major facilitator superfamily. TCR/Tet family.

It is found in the cell inner membrane. In Yersinia enterocolitica serotype O:8 / biotype 1B (strain NCTC 13174 / 8081), this protein is Putative multidrug resistance protein MdtD.